The chain runs to 229 residues: Tubulin-specific chaperone B (229 aa).

Residues 170 to 212 (GATKFKEGVWVGVKYDEPVGKNDGSVAGVRYFDCDPKYGGFVR) enclose the CAP-Gly domain.

This sequence belongs to the TBCB family. Supercomplex made of cofactors A to E. Cofactors A and D function by capturing and stabilizing tubulin in a quasi-native conformation. Cofactor E binds to the cofactor D-tubulin complex; interaction with cofactor C then causes the release of tubulin polypeptides that are committed to the native state.

It is found in the cytoplasm. Its subcellular location is the cytoskeleton. Its function is as follows. Binds to alpha-tubulin folding intermediates after their interaction with cytosolic chaperonin in the pathway leading from newly synthesized tubulin to properly folded heterodimer. The protein is Tubulin-specific chaperone B of Caenorhabditis elegans.